A 267-amino-acid polypeptide reads, in one-letter code: Acyl-[acyl-carrier-protein]--UDP-N-acetylglucosamine O-acyltransferase (267 aa).

The protein belongs to the transferase hexapeptide repeat family. LpxA subfamily. As to quaternary structure, homotrimer.

The protein resides in the cytoplasm. It catalyses the reaction a (3R)-hydroxyacyl-[ACP] + UDP-N-acetyl-alpha-D-glucosamine = a UDP-3-O-[(3R)-3-hydroxyacyl]-N-acetyl-alpha-D-glucosamine + holo-[ACP]. It functions in the pathway glycolipid biosynthesis; lipid IV(A) biosynthesis; lipid IV(A) from (3R)-3-hydroxytetradecanoyl-[acyl-carrier-protein] and UDP-N-acetyl-alpha-D-glucosamine: step 1/6. Functionally, involved in the biosynthesis of lipid A, a phosphorylated glycolipid that anchors the lipopolysaccharide to the outer membrane of the cell. This is Acyl-[acyl-carrier-protein]--UDP-N-acetylglucosamine O-acyltransferase from Hamiltonella defensa subsp. Acyrthosiphon pisum (strain 5AT).